The following is a 950-amino-acid chain: Glycine dehydrogenase (decarboxylating) (950 aa).

At Lys-699 the chain carries N6-(pyridoxal phosphate)lysine.

It belongs to the GcvP family. As to quaternary structure, the glycine cleavage system is composed of four proteins: P, T, L and H. Requires pyridoxal 5'-phosphate as cofactor.

It carries out the reaction N(6)-[(R)-lipoyl]-L-lysyl-[glycine-cleavage complex H protein] + glycine + H(+) = N(6)-[(R)-S(8)-aminomethyldihydrolipoyl]-L-lysyl-[glycine-cleavage complex H protein] + CO2. In terms of biological role, the glycine cleavage system catalyzes the degradation of glycine. The P protein binds the alpha-amino group of glycine through its pyridoxal phosphate cofactor; CO(2) is released and the remaining methylamine moiety is then transferred to the lipoamide cofactor of the H protein. This chain is Glycine dehydrogenase (decarboxylating), found in Chromobacterium violaceum (strain ATCC 12472 / DSM 30191 / JCM 1249 / CCUG 213 / NBRC 12614 / NCIMB 9131 / NCTC 9757 / MK).